Reading from the N-terminus, the 460-residue chain is Probable Xaa-Pro aminopeptidase PEPP (460 aa).

Mn(2+) contacts are provided by Asp256, Asp267, Glu390, and Glu430.

It belongs to the peptidase M24B family. Requires Mn(2+) as cofactor.

The catalysed reaction is Release of any N-terminal amino acid, including proline, that is linked to proline, even from a dipeptide or tripeptide.. Catalyzes the removal of a penultimate prolyl residue from the N-termini of peptides. This is Probable Xaa-Pro aminopeptidase PEPP (PEPP) from Podospora anserina (strain S / ATCC MYA-4624 / DSM 980 / FGSC 10383) (Pleurage anserina).